The primary structure comprises 426 residues: Histidine--tRNA ligase (426 aa).

It belongs to the class-II aminoacyl-tRNA synthetase family. In terms of assembly, homodimer.

It is found in the cytoplasm. It catalyses the reaction tRNA(His) + L-histidine + ATP = L-histidyl-tRNA(His) + AMP + diphosphate + H(+). This is Histidine--tRNA ligase from Microcystis aeruginosa (strain NIES-843 / IAM M-2473).